A 360-amino-acid polypeptide reads, in one-letter code: Chorismate synthase (360 aa).

NADP(+) is bound by residues R48 and R54. FMN contacts are provided by residues 125-127, 246-247, G286, 301-305, and R327; these read RSS, NA, and KPTSS.

The protein belongs to the chorismate synthase family. As to quaternary structure, homotetramer. The cofactor is FMNH2.

It carries out the reaction 5-O-(1-carboxyvinyl)-3-phosphoshikimate = chorismate + phosphate. The protein operates within metabolic intermediate biosynthesis; chorismate biosynthesis; chorismate from D-erythrose 4-phosphate and phosphoenolpyruvate: step 7/7. Catalyzes the anti-1,4-elimination of the C-3 phosphate and the C-6 proR hydrogen from 5-enolpyruvylshikimate-3-phosphate (EPSP) to yield chorismate, which is the branch point compound that serves as the starting substrate for the three terminal pathways of aromatic amino acid biosynthesis. This reaction introduces a second double bond into the aromatic ring system. This Actinobacillus succinogenes (strain ATCC 55618 / DSM 22257 / CCUG 43843 / 130Z) protein is Chorismate synthase.